The following is a 198-amino-acid chain: 3-isopropylmalate dehydratase small subunit (198 aa).

Belongs to the LeuD family. LeuD type 1 subfamily. As to quaternary structure, heterodimer of LeuC and LeuD.

It carries out the reaction (2R,3S)-3-isopropylmalate = (2S)-2-isopropylmalate. The protein operates within amino-acid biosynthesis; L-leucine biosynthesis; L-leucine from 3-methyl-2-oxobutanoate: step 2/4. In terms of biological role, catalyzes the isomerization between 2-isopropylmalate and 3-isopropylmalate, via the formation of 2-isopropylmaleate. In Mycobacterium avium (strain 104), this protein is 3-isopropylmalate dehydratase small subunit.